Reading from the N-terminus, the 111-residue chain is Protein GLUTAMINE DUMPER 6 (111 aa).

At 1-16 (MRPTPKVEIWKSPVPY) the chain is on the extracellular side. Residues 17–37 (LFGGLFLLVLLIALALLSLVC) form a helical membrane-spanning segment. Residues 38–111 (THQKPSSSSN…NCDNVTVIST (74 aa)) are Cytoplasmic-facing. Residues 40–49 (QKPSSSSNNN) show a composition bias toward polar residues. Residues 40 to 63 (QKPSSSSNNNHMDEEDDVGDKDAK) form a disordered region. Residues 75–79 (VILAG) carry the VIMAG; degenerate motif.

It belongs to the GLUTAMINE DUMPER 1 (TC 9.B.60) family. In terms of tissue distribution, expressed in the vascular tissues.

Its subcellular location is the membrane. Its function is as follows. Probable subunit of an amino acid transporter involved in the regulation of the amino acid metabolism. Stimulates amino acid export by activating nonselective amino acid facilitators. In Arabidopsis thaliana (Mouse-ear cress), this protein is Protein GLUTAMINE DUMPER 6 (GDU6).